A 246-amino-acid polypeptide reads, in one-letter code: Peroxisomal membrane protein 11A (246 aa).

At 1-93 (MDAFIRVANQ…LCLTLANLNR (93 aa)) the chain is on the cytoplasmic side. The helical transmembrane segment at 94 to 114 (VVYYICDTVLWAKSVGLTSGV) threads the bilayer. At 115 to 217 (NREKWQRWAA…LNQLGIYKSN (103 aa)) the chain is on the lumenal side. A helical membrane pass occupies residues 218-238 (LGVVGLGGLISSLAGLLTVVY). The required for homodimerization, interaction with PEX11G, and peroxisomal localization stretch occupies residues 218-238 (LGVVGLGGLISSLAGLLTVVY). The Cytoplasmic segment spans residues 239–246 (PQLKLKAR).

The protein belongs to the peroxin-11 family. In terms of assembly, homodimer. Heterodimer with PEX11G. Probably interacts with COPB2 and COPA. Interacts with PEX19. Interacts with FIS1. In terms of tissue distribution, strongly expressed in liver and at lower levels in heart, brain, kidney and testis.

It is found in the peroxisome membrane. Its function is as follows. May be involved in peroxisomal proliferation and may regulate peroxisomes division. May mediate binding of coatomer proteins to the peroxisomal membrane. Promotes membrane protrusion and elongation on the peroxisomal surface. This chain is Peroxisomal membrane protein 11A (Pex11a), found in Mus musculus (Mouse).